The following is a 137-amino-acid chain: Basic phospholipase A2 homolog Pgo-K49 (137 aa).

Positions 1-16 are cleaved as a signal peptide; that stretch reads MRTLLIVAVLLVGVEG. 7 disulfide bridges follow: cysteine 42-cysteine 131, cysteine 44-cysteine 60, cysteine 59-cysteine 111, cysteine 65-cysteine 137, cysteine 66-cysteine 104, cysteine 73-cysteine 97, and cysteine 91-cysteine 102. The important for membrane-damaging activities in eukaryotes and bacteria; heparin-binding stretch occupies residues 121–133; sequence KKYKIHMKFFCKK.

Expressed by the venom gland.

Its subcellular location is the secreted. Its function is as follows. Snake venom phospholipase A2 homolog that lacks enzymatic activity. Is myotoxic. A model of myotoxic mechanism has been proposed: an apo Lys49-PLA2 is activated by the entrance of a hydrophobic molecule (e.g. fatty acid) at the hydrophobic channel of the protein leading to a reorientation of a monomer. This reorientation causes a transition between 'inactive' to 'active' states, causing alignment of C-terminal and membrane-docking sites (MDoS) side-by-side and putting the membrane-disruption sites (MDiS) in the same plane, exposed to solvent and in a symmetric position for both monomers. The MDoS region stabilizes the toxin on membrane by the interaction of charged residues with phospholipid head groups. Subsequently, the MDiS region destabilizes the membrane with penetration of hydrophobic residues. This insertion causes a disorganization of the membrane, allowing an uncontrolled influx of ions (i.e. calcium and sodium), and eventually triggering irreversible intracellular alterations and cell death. The polypeptide is Basic phospholipase A2 homolog Pgo-K49 (Cerrophidion godmani (Porthidium godmani)).